The sequence spans 545 residues: Chaperonin GroEL (545 aa).

ATP-binding positions include T29 to P32, D86 to T90, G413, N478 to A480, and D494.

Belongs to the chaperonin (HSP60) family. Forms a cylinder of 14 subunits composed of two heptameric rings stacked back-to-back. Interacts with the co-chaperonin GroES.

The protein resides in the cytoplasm. The enzyme catalyses ATP + H2O + a folded polypeptide = ADP + phosphate + an unfolded polypeptide.. Its function is as follows. Together with its co-chaperonin GroES, plays an essential role in assisting protein folding. The GroEL-GroES system forms a nano-cage that allows encapsulation of the non-native substrate proteins and provides a physical environment optimized to promote and accelerate protein folding. The sequence is that of Chaperonin GroEL from Exiguobacterium sibiricum (strain DSM 17290 / CCUG 55495 / CIP 109462 / JCM 13490 / 255-15).